Consider the following 475-residue polypeptide: Probable proline--tRNA ligase, mitochondrial (475 aa).

Residues 1 to 29 (MEGLLTRCRTLSALATCSLRHSRCIVRKC) constitute a mitochondrion transit peptide.

It belongs to the class-II aminoacyl-tRNA synthetase family.

It is found in the mitochondrion matrix. The enzyme catalyses tRNA(Pro) + L-proline + ATP = L-prolyl-tRNA(Pro) + AMP + diphosphate. Mitochondrial aminoacyl-tRNA synthetase that catalyzes the specific attachment of the proline amino acid (aa) to the homologous transfer RNA (tRNA), further participating in protein synthesis. The reaction occurs in a two steps: proline is first activated by ATP to form Pro-AMP and then transferred to the acceptor end of tRNA(Pro). The sequence is that of Probable proline--tRNA ligase, mitochondrial (Pars2) from Rattus norvegicus (Rat).